The sequence spans 322 residues: tRNA pseudouridine synthase B (322 aa).

Residues 1–11 (MRPPRTTELDR) are compositionally biased toward basic and acidic residues. The interval 1-22 (MRPPRTTELDRPMTTAASQRPR) is disordered. Residue aspartate 65 is the Nucleophile of the active site.

The protein belongs to the pseudouridine synthase TruB family. Type 1 subfamily.

The enzyme catalyses uridine(55) in tRNA = pseudouridine(55) in tRNA. In terms of biological role, responsible for synthesis of pseudouridine from uracil-55 in the psi GC loop of transfer RNAs. The chain is tRNA pseudouridine synthase B from Burkholderia lata (strain ATCC 17760 / DSM 23089 / LMG 22485 / NCIMB 9086 / R18194 / 383).